The primary structure comprises 1069 residues: Protocadherin-7 (1069 aa).

Residues 1–28 (MLRMRTAGWARGWCLGCCLLLPLSLSLA) form the signal peptide. Cadherin domains follow at residues 29 to 143 (AAKQ…TPTF), 144 to 308 (PSPV…SPRF), 309 to 415 (EKSV…VPSI), 424 to 535 (PLKD…PPMF), 536 to 639 (GQSV…DPKF), 640 to 742 (MQDV…APTV), and 745 to 862 (PKNI…IPLT). At 29–879 (AAKQLLRYRL…SYEISKQRLS (851 aa)) the chain is on the extracellular side. N79 carries N-linked (GlcNAc...) asparagine glycosylation. The disordered stretch occupies residues 182 to 242 (LLQEPGGGGS…GGTNPGGRSS (61 aa)). A compositionally biased stretch (gly residues) spans 207-221 (PGGGGNGASGGGSGG). N-linked (GlcNAc...) asparagine glycosylation is found at N689, N747, N780, N822, N840, and N845. Residues 880–900 (IVIGVVAGIMTVILIILIVVM) form a helical membrane-spanning segment. Over 901 to 1069 (ARYCRSKNKN…RLHPYITVFG (169 aa)) the chain is Cytoplasmic. The tract at residues 910–988 (NGYEAGKKDH…RYRSVNGGPG (79 aa)) is disordered. The span at 930-944 (KSKKPKKDKKNKKSK) shows a compositional bias: basic residues. A phosphoserine mark is found at S989 and S1011.

As to expression, expressed predominantly in brain and heart and at lower levels in various other tissues.

Its subcellular location is the cell membrane. The polypeptide is Protocadherin-7 (PCDH7) (Homo sapiens (Human)).